A 318-amino-acid chain; its full sequence is DNA-directed RNA polymerase subunit alpha (318 aa).

The tract at residues 1–227 (MTQFEIECLD…NLFSPLKTID (227 aa)) is alpha N-terminal domain (alpha-NTD). Positions 241–318 (HINQILIEEL…KEKTTKIYNK (78 aa)) are alpha C-terminal domain (alpha-CTD).

It belongs to the RNA polymerase alpha chain family. In plastids the minimal PEP RNA polymerase catalytic core is composed of four subunits: alpha, beta, beta', and beta''. When a (nuclear-encoded) sigma factor is associated with the core the holoenzyme is formed, which can initiate transcription.

It localises to the plastid. The protein localises to the chloroplast. It catalyses the reaction RNA(n) + a ribonucleoside 5'-triphosphate = RNA(n+1) + diphosphate. Its function is as follows. DNA-dependent RNA polymerase catalyzes the transcription of DNA into RNA using the four ribonucleoside triphosphates as substrates. The protein is DNA-directed RNA polymerase subunit alpha of Guillardia theta (Cryptophyte).